Reading from the N-terminus, the 167-residue chain is Protein-export protein SecB (167 aa).

It belongs to the SecB family. As to quaternary structure, homotetramer, a dimer of dimers. One homotetramer interacts with 1 SecA dimer.

Its subcellular location is the cytoplasm. One of the proteins required for the normal export of preproteins out of the cell cytoplasm. It is a molecular chaperone that binds to a subset of precursor proteins, maintaining them in a translocation-competent state. It also specifically binds to its receptor SecA. This chain is Protein-export protein SecB, found in Idiomarina loihiensis (strain ATCC BAA-735 / DSM 15497 / L2-TR).